The chain runs to 381 residues: Succinyl-diaminopimelate desuccinylase (381 aa).

His-69 is a binding site for Zn(2+). The active site involves Asp-71. Position 103 (Asp-103) interacts with Zn(2+). Glu-137 functions as the Proton acceptor in the catalytic mechanism. Zn(2+) is bound by residues Glu-138, Glu-166, and His-355.

Belongs to the peptidase M20A family. DapE subfamily. Homodimer. The cofactor is Zn(2+). Requires Co(2+) as cofactor.

It catalyses the reaction N-succinyl-(2S,6S)-2,6-diaminopimelate + H2O = (2S,6S)-2,6-diaminopimelate + succinate. It functions in the pathway amino-acid biosynthesis; L-lysine biosynthesis via DAP pathway; LL-2,6-diaminopimelate from (S)-tetrahydrodipicolinate (succinylase route): step 3/3. In terms of biological role, catalyzes the hydrolysis of N-succinyl-L,L-diaminopimelic acid (SDAP), forming succinate and LL-2,6-diaminopimelate (DAP), an intermediate involved in the bacterial biosynthesis of lysine and meso-diaminopimelic acid, an essential component of bacterial cell walls. This chain is Succinyl-diaminopimelate desuccinylase, found in Rickettsia africae (strain ESF-5).